We begin with the raw amino-acid sequence, 448 residues long: Thymidine phosphorylase (448 aa).

The protein belongs to the thymidine/pyrimidine-nucleoside phosphorylase family. As to quaternary structure, homodimer.

It carries out the reaction thymidine + phosphate = 2-deoxy-alpha-D-ribose 1-phosphate + thymine. It participates in pyrimidine metabolism; dTMP biosynthesis via salvage pathway; dTMP from thymine: step 1/2. Its function is as follows. The enzymes which catalyze the reversible phosphorolysis of pyrimidine nucleosides are involved in the degradation of these compounds and in their utilization as carbon and energy sources, or in the rescue of pyrimidine bases for nucleotide synthesis. This Vibrio cholerae serotype O1 (strain ATCC 39315 / El Tor Inaba N16961) protein is Thymidine phosphorylase.